Here is a 480-residue protein sequence, read N- to C-terminus: Protein nucleotidyltransferase YdiU (480 aa).

ATP contacts are provided by G86, G88, R89, K109, D121, G122, R172, and R179. Residue D248 is the Proton acceptor of the active site. The Mg(2+) site is built by N249 and D258. D258 lines the ATP pocket.

The protein belongs to the SELO family. The cofactor is Mg(2+). Mn(2+) is required as a cofactor.

It carries out the reaction L-seryl-[protein] + ATP = 3-O-(5'-adenylyl)-L-seryl-[protein] + diphosphate. The enzyme catalyses L-threonyl-[protein] + ATP = 3-O-(5'-adenylyl)-L-threonyl-[protein] + diphosphate. It catalyses the reaction L-tyrosyl-[protein] + ATP = O-(5'-adenylyl)-L-tyrosyl-[protein] + diphosphate. The catalysed reaction is L-histidyl-[protein] + UTP = N(tele)-(5'-uridylyl)-L-histidyl-[protein] + diphosphate. It carries out the reaction L-seryl-[protein] + UTP = O-(5'-uridylyl)-L-seryl-[protein] + diphosphate. The enzyme catalyses L-tyrosyl-[protein] + UTP = O-(5'-uridylyl)-L-tyrosyl-[protein] + diphosphate. Its function is as follows. Nucleotidyltransferase involved in the post-translational modification of proteins. It can catalyze the addition of adenosine monophosphate (AMP) or uridine monophosphate (UMP) to a protein, resulting in modifications known as AMPylation and UMPylation. This chain is Protein nucleotidyltransferase YdiU, found in Enterobacter sp. (strain 638).